We begin with the raw amino-acid sequence, 156 residues long: Small ribosomal subunit protein uS7 (156 aa).

Belongs to the universal ribosomal protein uS7 family. Part of the 30S ribosomal subunit. Contacts proteins S9 and S11.

One of the primary rRNA binding proteins, it binds directly to 16S rRNA where it nucleates assembly of the head domain of the 30S subunit. Is located at the subunit interface close to the decoding center, probably blocks exit of the E-site tRNA. In Rhodopseudomonas palustris (strain BisA53), this protein is Small ribosomal subunit protein uS7.